Reading from the N-terminus, the 394-residue chain is NAD(P)H-quinone oxidoreductase subunit H (394 aa).

It belongs to the complex I 49 kDa subunit family. In terms of assembly, NDH-1 can be composed of about 15 different subunits; different subcomplexes with different compositions have been identified which probably have different functions.

It is found in the cellular thylakoid membrane. The enzyme catalyses a plastoquinone + NADH + (n+1) H(+)(in) = a plastoquinol + NAD(+) + n H(+)(out). It catalyses the reaction a plastoquinone + NADPH + (n+1) H(+)(in) = a plastoquinol + NADP(+) + n H(+)(out). Its function is as follows. NDH-1 shuttles electrons from an unknown electron donor, via FMN and iron-sulfur (Fe-S) centers, to quinones in the respiratory and/or the photosynthetic chain. The immediate electron acceptor for the enzyme in this species is believed to be plastoquinone. Couples the redox reaction to proton translocation, and thus conserves the redox energy in a proton gradient. Cyanobacterial NDH-1 also plays a role in inorganic carbon-concentration. This chain is NAD(P)H-quinone oxidoreductase subunit H, found in Prochlorococcus marinus (strain MIT 9303).